The primary structure comprises 368 residues: Protein mab-21-like (368 aa).

The protein belongs to the mab-21 family.

The sequence is that of Protein mab-21-like from Drosophila pseudoobscura pseudoobscura (Fruit fly).